Reading from the N-terminus, the 384-residue chain is Polar flagellin C (384 aa).

Residues 317–347 (AKQNRLSHSINNLANIQENVDASNSRIKDTD) adopt a coiled-coil conformation.

It belongs to the bacterial flagellin family. In terms of assembly, heteromer of multiple flagellin subunits including FlaA, FlaB/D, FlaC, FlaE and FlaF. Homomer of FlaC is not able to form a functional filament.

It localises to the secreted. The protein resides in the bacterial flagellum. Functionally, flagellin is the subunit protein which polymerizes to form the filaments of bacterial flagella. FlaC is not essential for polar flagellar synthesis and swimming motility. Homomer of FlaC is not able to form a functional filament. The polypeptide is Polar flagellin C (flaC) (Vibrio parahaemolyticus serotype O3:K6 (strain RIMD 2210633)).